Reading from the N-terminus, the 239-residue chain is Methylthioribulose-1-phosphate dehydratase (239 aa).

Residue C94 participates in substrate binding. Residues H112 and H114 each coordinate Zn(2+). Catalysis depends on E136, which acts as the Proton donor/acceptor. H192 is a Zn(2+) binding site.

Belongs to the aldolase class II family. MtnB subfamily. The cofactor is Zn(2+).

The protein resides in the cytoplasm. It catalyses the reaction 5-(methylsulfanyl)-D-ribulose 1-phosphate = 5-methylsulfanyl-2,3-dioxopentyl phosphate + H2O. It participates in amino-acid biosynthesis; L-methionine biosynthesis via salvage pathway; L-methionine from S-methyl-5-thio-alpha-D-ribose 1-phosphate: step 2/6. Catalyzes the dehydration of methylthioribulose-1-phosphate (MTRu-1-P) into 2,3-diketo-5-methylthiopentyl-1-phosphate (DK-MTP-1-P). Functions in the methionine salvage pathway. May play a role in apoptosis. The protein is Methylthioribulose-1-phosphate dehydratase of Xenopus tropicalis (Western clawed frog).